A 175-amino-acid polypeptide reads, in one-letter code: Glycine-rich RNA-binding protein 1 (175 aa).

The region spanning 3 to 81 (AKVYVGNLSW…RRIRVNMANS (79 aa)) is the RRM domain. The interval 114-175 (GQPGGFQQPG…GYGGYNGQSQ (62 aa)) is disordered. Residues 122–131 (PGGFQQQGGY) show a composition bias toward low complexity. Over residues 132-141 (PQQGGYGGYQ) the composition is skewed to gly residues. The span at 142–162 (QPGFQPQQGGYGAPQQGYGAP) shows a compositional bias: low complexity. A compositionally biased stretch (gly residues) spans 163 to 175 (QQGGYGGYNGQSQ).

It belongs to the glycine-rich RNA-binding protein family. In terms of assembly, part of large ribonucleoprotein complexes (mRNPs) containing RNA-binding proteins RRM4 and PAB1, endosome-binding protein UPA1, core scaffold protein UPA2 and associated factor GRP1.

The protein resides in the endosome. Its function is as follows. Component of endosomal mRNA transport that regulates polarity of the infectious hyphae by transporting a broad spectrum of cargo mRNAs from the nucleus to cell poles. In Mycosarcoma maydis (Corn smut fungus), this protein is Glycine-rich RNA-binding protein 1.